The primary structure comprises 465 residues: Siroheme synthase (465 aa).

A precorrin-2 dehydrogenase /sirohydrochlorin ferrochelatase region spans residues 1-203 (MDFLPLFHSL…GRPAEAERLL (203 aa)). Residues 22-23 (EV) and 43-44 (PQ) contribute to the NAD(+) site. Serine 128 bears the Phosphoserine mark. The segment at 217 to 465 (GEVYLVGAGP…AWFEGAREDA (249 aa)) is uroporphyrinogen-III C-methyltransferase. Proline 226 contacts S-adenosyl-L-methionine. The Proton acceptor role is filled by aspartate 249. Lysine 271 acts as the Proton donor in catalysis. S-adenosyl-L-methionine is bound by residues 302-304 (GGD), isoleucine 307, 332-333 (TA), methionine 384, and glycine 413.

The protein in the N-terminal section; belongs to the precorrin-2 dehydrogenase / sirohydrochlorin ferrochelatase family. This sequence in the C-terminal section; belongs to the precorrin methyltransferase family.

The catalysed reaction is uroporphyrinogen III + 2 S-adenosyl-L-methionine = precorrin-2 + 2 S-adenosyl-L-homocysteine + H(+). It catalyses the reaction precorrin-2 + NAD(+) = sirohydrochlorin + NADH + 2 H(+). It carries out the reaction siroheme + 2 H(+) = sirohydrochlorin + Fe(2+). It functions in the pathway cofactor biosynthesis; adenosylcobalamin biosynthesis; precorrin-2 from uroporphyrinogen III: step 1/1. The protein operates within cofactor biosynthesis; adenosylcobalamin biosynthesis; sirohydrochlorin from precorrin-2: step 1/1. It participates in porphyrin-containing compound metabolism; siroheme biosynthesis; precorrin-2 from uroporphyrinogen III: step 1/1. Its pathway is porphyrin-containing compound metabolism; siroheme biosynthesis; siroheme from sirohydrochlorin: step 1/1. It functions in the pathway porphyrin-containing compound metabolism; siroheme biosynthesis; sirohydrochlorin from precorrin-2: step 1/1. Multifunctional enzyme that catalyzes the SAM-dependent methylations of uroporphyrinogen III at position C-2 and C-7 to form precorrin-2 via precorrin-1. Then it catalyzes the NAD-dependent ring dehydrogenation of precorrin-2 to yield sirohydrochlorin. Finally, it catalyzes the ferrochelation of sirohydrochlorin to yield siroheme. The sequence is that of Siroheme synthase from Pseudomonas aeruginosa (strain UCBPP-PA14).